The primary structure comprises 181 residues: Adenine phosphoribosyltransferase (181 aa).

Belongs to the purine/pyrimidine phosphoribosyltransferase family. As to quaternary structure, homodimer.

It localises to the cytoplasm. The enzyme catalyses AMP + diphosphate = 5-phospho-alpha-D-ribose 1-diphosphate + adenine. It functions in the pathway purine metabolism; AMP biosynthesis via salvage pathway; AMP from adenine: step 1/1. In terms of biological role, catalyzes a salvage reaction resulting in the formation of AMP, that is energically less costly than de novo synthesis. The chain is Adenine phosphoribosyltransferase from Colwellia psychrerythraea (strain 34H / ATCC BAA-681) (Vibrio psychroerythus).